A 438-amino-acid polypeptide reads, in one-letter code: Ubiquitin carboxyl-terminal hydrolase 27 (438 aa).

Positions 78 to 421 constitute a USP domain; sequence RGLINLGNTC…EGYLLFYHKQ (344 aa). The active-site Nucleophile is Cys87. His380 (proton acceptor) is an active-site residue.

Belongs to the peptidase C19 family. Interacts with phosphorylated BCL2L11 isoform BIMEL; this interaction leads to BCL2L11 deubiquitination and stabilization.

The protein resides in the cytoplasm. It localises to the cytosol. The protein localises to the nucleus. It catalyses the reaction Thiol-dependent hydrolysis of ester, thioester, amide, peptide and isopeptide bonds formed by the C-terminal Gly of ubiquitin (a 76-residue protein attached to proteins as an intracellular targeting signal).. Its function is as follows. Deubiquitinase involved in innate antiviral immunity by mediating deubiquitination of CGAS and RIGI. Negatively regulates RIGI by mediating 'Lys-63'-linked deubiquitination of RIGI, inhibiting type I interferon signaling. Also regulates 'Lys-63'-linked ubiquitination level of MDA5/IFIH1. Acts as a positive regulator of the cGAS-STING pathway by catalyzing 'Lys-48'-linked deubiquitination of CGAS, thereby promoting its stabilization. Can reduce the levels of BCL2L11/BIM ubiquitination and stabilize BCL2L11 in response to the RAF-MAPK-degradation signal. By acting on BCL2L11 levels, may counteract the anti-apoptotic effects of MAPK activity. This Mus musculus (Mouse) protein is Ubiquitin carboxyl-terminal hydrolase 27.